The primary structure comprises 228 residues: 2-C-methyl-D-erythritol 4-phosphate cytidylyltransferase (228 aa).

The protein belongs to the IspD/TarI cytidylyltransferase family. IspD subfamily.

The enzyme catalyses 2-C-methyl-D-erythritol 4-phosphate + CTP + H(+) = 4-CDP-2-C-methyl-D-erythritol + diphosphate. Its pathway is isoprenoid biosynthesis; isopentenyl diphosphate biosynthesis via DXP pathway; isopentenyl diphosphate from 1-deoxy-D-xylulose 5-phosphate: step 2/6. Its function is as follows. Catalyzes the formation of 4-diphosphocytidyl-2-C-methyl-D-erythritol from CTP and 2-C-methyl-D-erythritol 4-phosphate (MEP). In Geobacillus thermodenitrificans (strain NG80-2), this protein is 2-C-methyl-D-erythritol 4-phosphate cytidylyltransferase.